A 112-amino-acid polypeptide reads, in one-letter code: UPF0102 protein C8J_0145 (112 aa).

This sequence belongs to the UPF0102 family.

The polypeptide is UPF0102 protein C8J_0145 (Campylobacter jejuni subsp. jejuni serotype O:6 (strain 81116 / NCTC 11828)).